We begin with the raw amino-acid sequence, 375 residues long: 23S rRNA (uracil(747)-C(5))-methyltransferase RlmC (375 aa).

4 residues coordinate [4Fe-4S] cluster: C3, C11, C14, and C87. S-adenosyl-L-methionine is bound by residues Q212, F241, E262, and N307. The Nucleophile role is filled by C334.

The protein belongs to the class I-like SAM-binding methyltransferase superfamily. RNA M5U methyltransferase family. RlmC subfamily.

It catalyses the reaction uridine(747) in 23S rRNA + S-adenosyl-L-methionine = 5-methyluridine(747) in 23S rRNA + S-adenosyl-L-homocysteine + H(+). Catalyzes the formation of 5-methyl-uridine at position 747 (m5U747) in 23S rRNA. In Salmonella arizonae (strain ATCC BAA-731 / CDC346-86 / RSK2980), this protein is 23S rRNA (uracil(747)-C(5))-methyltransferase RlmC.